The sequence spans 125 residues: Small ribosomal subunit protein uS13 (125 aa).

The disordered stretch occupies residues 92–125 (RRSLPVRGQRTQTNARTRKGKRKTVAGKKKATKK). The span at 107–125 (RTRKGKRKTVAGKKKATKK) shows a compositional bias: basic residues.

Belongs to the universal ribosomal protein uS13 family. In terms of assembly, part of the 30S ribosomal subunit. Forms a loose heterodimer with protein S19. Forms two bridges to the 50S subunit in the 70S ribosome.

Located at the top of the head of the 30S subunit, it contacts several helices of the 16S rRNA. In the 70S ribosome it contacts the 23S rRNA (bridge B1a) and protein L5 of the 50S subunit (bridge B1b), connecting the 2 subunits; these bridges are implicated in subunit movement. Contacts the tRNAs in the A and P-sites. This chain is Small ribosomal subunit protein uS13, found in Chlorobium limicola (strain DSM 245 / NBRC 103803 / 6330).